A 150-amino-acid polypeptide reads, in one-letter code: Holo-[acyl-carrier-protein] synthase (150 aa).

Mg(2+)-binding residues include Asp-8 and Glu-57.

This sequence belongs to the P-Pant transferase superfamily. AcpS family. It depends on Mg(2+) as a cofactor.

The protein resides in the cytoplasm. It carries out the reaction apo-[ACP] + CoA = holo-[ACP] + adenosine 3',5'-bisphosphate + H(+). Functionally, transfers the 4'-phosphopantetheine moiety from coenzyme A to a Ser of acyl-carrier-protein. The polypeptide is Holo-[acyl-carrier-protein] synthase (Jannaschia sp. (strain CCS1)).